Consider the following 61-residue polypeptide: Large ribosomal subunit protein uL30 (61 aa).

This sequence belongs to the universal ribosomal protein uL30 family. As to quaternary structure, part of the 50S ribosomal subunit.

The protein is Large ribosomal subunit protein uL30 of Parafrankia sp. (strain EAN1pec).